The sequence spans 159 residues: Protein-export protein SecB (159 aa).

This sequence belongs to the SecB family. In terms of assembly, homotetramer, a dimer of dimers. One homotetramer interacts with 1 SecA dimer.

The protein localises to the cytoplasm. One of the proteins required for the normal export of preproteins out of the cell cytoplasm. It is a molecular chaperone that binds to a subset of precursor proteins, maintaining them in a translocation-competent state. It also specifically binds to its receptor SecA. In Pseudomonas fluorescens (strain ATCC BAA-477 / NRRL B-23932 / Pf-5), this protein is Protein-export protein SecB.